A 282-amino-acid polypeptide reads, in one-letter code: Bifunctional protein FolD (282 aa).

NADP(+) is bound by residues 167 to 169 (GRS) and Ser192.

This sequence belongs to the tetrahydrofolate dehydrogenase/cyclohydrolase family. Homodimer.

It carries out the reaction (6R)-5,10-methylene-5,6,7,8-tetrahydrofolate + NADP(+) = (6R)-5,10-methenyltetrahydrofolate + NADPH. The enzyme catalyses (6R)-5,10-methenyltetrahydrofolate + H2O = (6R)-10-formyltetrahydrofolate + H(+). The protein operates within one-carbon metabolism; tetrahydrofolate interconversion. Catalyzes the oxidation of 5,10-methylenetetrahydrofolate to 5,10-methenyltetrahydrofolate and then the hydrolysis of 5,10-methenyltetrahydrofolate to 10-formyltetrahydrofolate. The sequence is that of Bifunctional protein FolD from Acidobacterium capsulatum (strain ATCC 51196 / DSM 11244 / BCRC 80197 / JCM 7670 / NBRC 15755 / NCIMB 13165 / 161).